Reading from the N-terminus, the 105-residue chain is Urease subunit beta (105 aa).

This sequence belongs to the urease beta subunit family. Heterotrimer of UreA (gamma), UreB (beta) and UreC (alpha) subunits. Three heterotrimers associate to form the active enzyme.

The protein localises to the cytoplasm. The catalysed reaction is urea + 2 H2O + H(+) = hydrogencarbonate + 2 NH4(+). It participates in nitrogen metabolism; urea degradation; CO(2) and NH(3) from urea (urease route): step 1/1. The chain is Urease subunit beta from Shewanella halifaxensis (strain HAW-EB4).